The chain runs to 308 residues: Acyltransferase drtE (308 aa).

The 125-residue stretch at Pro-35–Arg-159 folds into the AB hydrolase-1 domain.

This sequence belongs to the polyketide transferase af380 family.

It participates in secondary metabolite biosynthesis; terpenoid biosynthesis. Functionally, acyltransferase; part of the gene cluster that mediates the biosynthesis of various drimane-type sesquiterpene esters, compounds that exhibit diverse biological activities and are widely present in eukaryotes. The pathway begins with the synthesis of the backbone drimenol by the terpene cyclase drtB using farnesyl pyrophosphate (FPP) as substrate. The cytochrome P450 monooxygenase drtD is then responsible for the hydroxylations at C-6, C-9 and C-12, as well as the oxidation of hydroxyl groups at C-6 and C-11 to a ketone and an aldehyde, respectively. Then, the biosynthesis can go in two directions, either the hydroxylated drimenol is further hydroxylated at C-2 and C-3 by an enzyme(s) not associated with the drt cluster, or the FAD-binding oxidoreductase drtC further oxidizes C-11 or C-12 to form the butyrolactone ring. DrtB, drtD and drtC are solely responsible for the formation of the different drimane structures observed during drimane sesquiterpenes biosynthesis. The polyketide synthase drtA synthesizes different lengths (C6 and C8) of PKS chains, which are then oxidized to varying degrees by the short-chain dehydrogenase drtF. Finally, these PKS chains are transferred onto drimane sesquiterpenes by the acyltransferase drtE, forming the sesquiterpene esters. In addition to the different fatty acyl-CoA chains produced by drtA, drtE is also able to use cinnamoyl-CoA as a substrate. The sequence is that of Acyltransferase drtE from Aspergillus calidoustus.